The chain runs to 292 residues: Hypoxia responsive morphology factor A (292 aa).

A Bipartite nuclear localization signal motif is present at residues 48–70; the sequence is RRNGRRRNLEYVAQHRRKIARKI. The segment at 156-186 is RNA recognition motif (RRM)-like domain; it reads GKEHYSLHLSTLPAIRNAFGDVIFDAIERSP.

The protein belongs to the hrmA family.

The protein localises to the nucleus. Its function is as follows. Hypoxia responsive morphology factor that modulates the expression of the subtelomeric hrmA-associated cluster (HAC) containing genes that alter the hyphal surface (such as reduced total chitin or increased beta-glucan exposure) and perturb inter-hyphal interactions within the developing biofilms, resulting in a loss of vertically aligned polarized growing filaments. Consequently, this hypoxia-typic morphotype (called H-MORPH) with altered biofilm architecture leads to increased hypoxia fitness, increased host inflammation, rapid disease progression, and mortality in a murine model of invasive aspergillosis. The sequence is that of Hypoxia responsive morphology factor A from Aspergillus fumigatus (strain CBS 144.89 / FGSC A1163 / CEA10) (Neosartorya fumigata).